The chain runs to 484 residues: Ribosomal RNA small subunit methyltransferase F (484 aa).

Residues 119 to 125 (ASAPGSK), Glu143, Asp170, and Asp188 each bind S-adenosyl-L-methionine. Cys241 (nucleophile) is an active-site residue.

This sequence belongs to the class I-like SAM-binding methyltransferase superfamily. RsmB/NOP family.

The protein localises to the cytoplasm. The catalysed reaction is cytidine(1407) in 16S rRNA + S-adenosyl-L-methionine = 5-methylcytidine(1407) in 16S rRNA + S-adenosyl-L-homocysteine + H(+). Functionally, specifically methylates the cytosine at position 1407 (m5C1407) of 16S rRNA. In Shewanella frigidimarina (strain NCIMB 400), this protein is Ribosomal RNA small subunit methyltransferase F.